We begin with the raw amino-acid sequence, 968 residues long: Bifunctional glyoxylate cycle protein (968 aa).

Positions 1-443 are isocitrate lyase; the sequence is MSSAAKNFYQ…AVASQDEEIL (443 aa). Residues 444-968 form a malate synthase region; it reads SLTAQNVAGD…AYDRLVSEGY (525 aa). Arginine 601 functions as the Proton acceptor in the catalytic mechanism. Aspartate 881 (proton donor) is an active-site residue.

It in the N-terminal section; belongs to the isocitrate lyase/PEP mutase superfamily. Isocitrate lyase family. The protein in the C-terminal section; belongs to the malate synthase family. In terms of tissue distribution, intestinal and body wall muscle cells.

The catalysed reaction is D-threo-isocitrate = glyoxylate + succinate. It carries out the reaction glyoxylate + acetyl-CoA + H2O = (S)-malate + CoA + H(+). Its pathway is carbohydrate metabolism; glyoxylate cycle; (S)-malate from isocitrate: step 1/2. The protein operates within carbohydrate metabolism; glyoxylate cycle; (S)-malate from isocitrate: step 2/2. The chain is Bifunctional glyoxylate cycle protein (icl-1) from Caenorhabditis elegans.